The following is a 473-amino-acid chain: UDP-N-acetylmuramate--L-alanine ligase (473 aa).

122-128 provides a ligand contact to ATP; it reads GTHGKTT.

This sequence belongs to the MurCDEF family.

It is found in the cytoplasm. The enzyme catalyses UDP-N-acetyl-alpha-D-muramate + L-alanine + ATP = UDP-N-acetyl-alpha-D-muramoyl-L-alanine + ADP + phosphate + H(+). It functions in the pathway cell wall biogenesis; peptidoglycan biosynthesis. Cell wall formation. The polypeptide is UDP-N-acetylmuramate--L-alanine ligase (Teredinibacter turnerae (strain ATCC 39867 / T7901)).